The sequence spans 376 residues: Succinyl-diaminopimelate desuccinylase (376 aa).

A Zn(2+)-binding site is contributed by histidine 67. Aspartate 69 is an active-site residue. Aspartate 100 serves as a coordination point for Zn(2+). Glutamate 134 functions as the Proton acceptor in the catalytic mechanism. Zn(2+) is bound by residues glutamate 135, glutamate 163, and histidine 349.

This sequence belongs to the peptidase M20A family. DapE subfamily. Homodimer. Requires Zn(2+) as cofactor. Co(2+) is required as a cofactor.

It catalyses the reaction N-succinyl-(2S,6S)-2,6-diaminopimelate + H2O = (2S,6S)-2,6-diaminopimelate + succinate. Its pathway is amino-acid biosynthesis; L-lysine biosynthesis via DAP pathway; LL-2,6-diaminopimelate from (S)-tetrahydrodipicolinate (succinylase route): step 3/3. Functionally, catalyzes the hydrolysis of N-succinyl-L,L-diaminopimelic acid (SDAP), forming succinate and LL-2,6-diaminopimelate (DAP), an intermediate involved in the bacterial biosynthesis of lysine and meso-diaminopimelic acid, an essential component of bacterial cell walls. This Haemophilus ducreyi (strain 35000HP / ATCC 700724) protein is Succinyl-diaminopimelate desuccinylase.